Here is a 152-residue protein sequence, read N- to C-terminus: Large ribosomal subunit protein uL15 (152 aa).

Positions 1–57 (MTSTLNTLKSNSGSRKKKLRKGRGIAAGQGASCGFGMRGQKSRSGRPTRPGFEGGQM) are disordered. Over residues 14 to 23 (SRKKKLRKGR) the composition is skewed to basic residues. The segment covering 25–37 (IAAGQGASCGFGM) has biased composition (gly residues).

Belongs to the universal ribosomal protein uL15 family. As to quaternary structure, part of the 50S ribosomal subunit.

In terms of biological role, binds to the 23S rRNA. The chain is Large ribosomal subunit protein uL15 from Prochlorococcus marinus (strain AS9601).